A 416-amino-acid polypeptide reads, in one-letter code: Bifunctional protein GlmU (416 aa).

Residues 1-229 (MTNYAIILAA…FNESLGVNDR (229 aa)) are pyrophosphorylase. UDP-N-acetyl-alpha-D-glucosamine contacts are provided by residues 8-11 (LAAG), lysine 22, glutamine 72, and 77-78 (GT). Aspartate 102 contacts Mg(2+). 4 residues coordinate UDP-N-acetyl-alpha-D-glucosamine: glycine 139, glutamate 154, asparagine 169, and asparagine 227. Asparagine 227 lines the Mg(2+) pocket. The linker stretch occupies residues 230-250 (VALATAETVMRQRITQKHMVN). Residues 251-416 (GVTFQNPETV…DSHCTFGSWR (166 aa)) are N-acetyltransferase. UDP-N-acetyl-alpha-D-glucosamine contacts are provided by arginine 332 and lysine 350. Histidine 362 (proton acceptor) is an active-site residue. UDP-N-acetyl-alpha-D-glucosamine is bound by residues tyrosine 365 and asparagine 376. Residues alanine 379 and 385–386 (NY) each bind acetyl-CoA.

In the N-terminal section; belongs to the N-acetylglucosamine-1-phosphate uridyltransferase family. The protein in the C-terminal section; belongs to the transferase hexapeptide repeat family. As to quaternary structure, homotrimer. Requires Mg(2+) as cofactor.

It localises to the cytoplasm. The enzyme catalyses alpha-D-glucosamine 1-phosphate + acetyl-CoA = N-acetyl-alpha-D-glucosamine 1-phosphate + CoA + H(+). The catalysed reaction is N-acetyl-alpha-D-glucosamine 1-phosphate + UTP + H(+) = UDP-N-acetyl-alpha-D-glucosamine + diphosphate. Its pathway is nucleotide-sugar biosynthesis; UDP-N-acetyl-alpha-D-glucosamine biosynthesis; N-acetyl-alpha-D-glucosamine 1-phosphate from alpha-D-glucosamine 6-phosphate (route II): step 2/2. It participates in nucleotide-sugar biosynthesis; UDP-N-acetyl-alpha-D-glucosamine biosynthesis; UDP-N-acetyl-alpha-D-glucosamine from N-acetyl-alpha-D-glucosamine 1-phosphate: step 1/1. The protein operates within bacterial outer membrane biogenesis; LPS lipid A biosynthesis. Functionally, catalyzes the last two sequential reactions in the de novo biosynthetic pathway for UDP-N-acetylglucosamine (UDP-GlcNAc). The C-terminal domain catalyzes the transfer of acetyl group from acetyl coenzyme A to glucosamine-1-phosphate (GlcN-1-P) to produce N-acetylglucosamine-1-phosphate (GlcNAc-1-P), which is converted into UDP-GlcNAc by the transfer of uridine 5-monophosphate (from uridine 5-triphosphate), a reaction catalyzed by the N-terminal domain. The polypeptide is Bifunctional protein GlmU (Streptococcus pyogenes serotype M12 (strain MGAS2096)).